The sequence spans 87 residues: Large ribosomal subunit protein bL27 (87 aa).

Belongs to the bacterial ribosomal protein bL27 family.

This chain is Large ribosomal subunit protein bL27, found in Pseudarthrobacter chlorophenolicus (strain ATCC 700700 / DSM 12829 / CIP 107037 / JCM 12360 / KCTC 9906 / NCIMB 13794 / A6) (Arthrobacter chlorophenolicus).